A 655-amino-acid polypeptide reads, in one-letter code: MSLLSTISSPQDVKRLDHEELATLAAEIRDFLIHAVARTGGHLGPNLGAVELTLAIHRVFDSPFDRILWDTGHQSYVHKILTGRADDFSGLRQRGGLSGYPSRAESEHDIIENSHASTALSYADGLSRAYALRGEDRAVVAVVGDGALTGGMCWEALNNIAADDRPVVIVVNDNGRSYAPTIGGLADHLAALRLAPEYEQVLDVVKQVLGRTPLVGPPLFDALHGIKKGIKDVVQPQGMFEDLGLKYVGPVDGHDVVAVESALRRARDFGGPVIVHCVTRKGFGYPPAEQDDADNFHGVGIIDPATGKPVSTSKTISWTSIFSDEIVQIGSERPDVVTLTAAMLQPVGLGAFAKAYPDRVFDVGIAEQHAVTSAAGLAMGGLKPVVCLYATFLNRAFDQVLMDVALHRQPVTFVLDRAGITGEDGASHNGMWDLSFLQVVPGLAIAAPRDAPTLRAELREAVGDTDGPTVVRFPKGKVAVDVPAIDTVGGVDVLYRSPKVAQRREVLLVSIGAMAATCLEVAERVASQGIGITVVDPRWVKPLDPALIDLARAHDLVVTVEDNGRVGGVGAALAQLLRDADVDVPLRDFGIAQRFLDHGKRDEVMAEVGLAPQDLARKVVEAVAKRQPAIEDDPTSPGEAAPAGERAGEAIGDQR.

Thiamine diphosphate is bound by residues histidine 73 and 114 to 116; that span reads SHA. Aspartate 145 is a Mg(2+) binding site. Residues 146–147, asparagine 174, tyrosine 285, and glutamate 367 each bind thiamine diphosphate; that span reads GA. Asparagine 174 provides a ligand contact to Mg(2+). Positions 626–655 are disordered; sequence RQPAIEDDPTSPGEAAPAGERAGEAIGDQR. Over residues 646-655 the composition is skewed to basic and acidic residues; it reads RAGEAIGDQR.

Belongs to the transketolase family. DXPS subfamily. Homodimer. It depends on Mg(2+) as a cofactor. The cofactor is thiamine diphosphate.

The enzyme catalyses D-glyceraldehyde 3-phosphate + pyruvate + H(+) = 1-deoxy-D-xylulose 5-phosphate + CO2. Its pathway is metabolic intermediate biosynthesis; 1-deoxy-D-xylulose 5-phosphate biosynthesis; 1-deoxy-D-xylulose 5-phosphate from D-glyceraldehyde 3-phosphate and pyruvate: step 1/1. Functionally, catalyzes the acyloin condensation reaction between C atoms 2 and 3 of pyruvate and glyceraldehyde 3-phosphate to yield 1-deoxy-D-xylulose-5-phosphate (DXP). The chain is 1-deoxy-D-xylulose-5-phosphate synthase from Frankia casuarinae (strain DSM 45818 / CECT 9043 / HFP020203 / CcI3).